A 348-amino-acid chain; its full sequence is MIDIDGSYGEGGGQVLRTSLSLAAITGEPIRIAGIRAGRRKPGLAAQHLTAVRAAARICHGELQGDALGSTMLEFIPGGGVKAGNYIFDVSEVQQGGSAGAITLVLQTILLPLALADGDSHITLRGGTHVIFSPTVTYIERVYLPMLCRMGIKAQVKLGAWGWYPRGGGEVNLQVKGGCQLCGLNLLERGELKRVQGLAVATELPAHIPQRMANRAENLLRTAGLRVSMQALREKGVAPGAGIFLTAEYCNSLTGFGGFGRLRLSSEKVAEIACGQLLQFHETGAPVDEHLADQLLLPAALASESSQYRVAEVSTHLTTNAAVIEKFGLGKITVNQAERVVAIASDKT.

Residues Q107 and 290–294 (HLADQ) contribute to the ATP site. The Tele-AMP-histidine intermediate role is filled by H316.

The protein belongs to the RNA 3'-terminal cyclase family. Type 1 subfamily.

Its subcellular location is the cytoplasm. The enzyme catalyses a 3'-end 3'-phospho-ribonucleotide-RNA + ATP = a 3'-end 2',3'-cyclophospho-ribonucleotide-RNA + AMP + diphosphate. In terms of biological role, catalyzes the conversion of 3'-phosphate to a 2',3'-cyclic phosphodiester at the end of RNA. The mechanism of action of the enzyme occurs in 3 steps: (A) adenylation of the enzyme by ATP; (B) transfer of adenylate to an RNA-N3'P to produce RNA-N3'PP5'A; (C) and attack of the adjacent 2'-hydroxyl on the 3'-phosphorus in the diester linkage to produce the cyclic end product. The biological role of this enzyme is unknown but it is likely to function in some aspects of cellular RNA processing. The polypeptide is RNA 3'-terminal phosphate cyclase (Trichormus variabilis (strain ATCC 29413 / PCC 7937) (Anabaena variabilis)).